A 286-amino-acid polypeptide reads, in one-letter code: MAGAKEIRSKIASIKSTQKITSAMEKVAVSKMRKAQMRMAASRPYAERIRQVIGHLANANPEYRHPFMIERPVKRAGYIVVSSDRGLCGGLNTNLFKALVKDMNENREQGVEIDLCVIGSKGATFFRIFGGNVVAAISHLGEEPSINDLIGSVKVMLDAYLDGRIDRLSVVSNKFINTMTQKPTVEQLVPLVATPDQDLKHHWDYLYEPDAKELLDGLMVRYVESQVYQAVVENNAAEQAARMIAMKNATDNAGDLISELQLIYNKARQAAITQEISEIVGGAAAV.

It belongs to the ATPase gamma chain family. F-type ATPases have 2 components, CF(1) - the catalytic core - and CF(0) - the membrane proton channel. CF(1) has five subunits: alpha(3), beta(3), gamma(1), delta(1), epsilon(1). CF(0) has three main subunits: a, b and c.

Its subcellular location is the cell inner membrane. Its function is as follows. Produces ATP from ADP in the presence of a proton gradient across the membrane. The gamma chain is believed to be important in regulating ATPase activity and the flow of protons through the CF(0) complex. The protein is ATP synthase gamma chain of Pseudomonas entomophila (strain L48).